Here is a 744-residue protein sequence, read N- to C-terminus: Deleted in azoospermia protein 1 (744 aa).

The segment covering 1–10 (MSAANPETPN) has biased composition (polar residues). The interval 1–27 (MSAANPETPNSTISREASTQSSSAAAS) is disordered. The segment covering 11–27 (STISREASTQSSSAAAS) has biased composition (low complexity). The region spanning 40–115 (NTVFVGGIDA…KKLKLGPAIR (76 aa)) is the RRM 1 domain. The span at 163 to 175 (QHVQSAANPETPN) shows a compositional bias: polar residues. Positions 163–192 (QHVQSAANPETPNSTISREASTQSSSAAAS) are disordered. Positions 176-192 (STISREASTQSSSAAAS) are enriched in low complexity. One can recognise an RRM 2 domain in the interval 205-280 (NTVFVGGIDA…KKLKLGPAIR (76 aa)). A compositionally biased stretch (polar residues) spans 328–340 (QHVQSAANPETPN). The interval 328 to 357 (QHVQSAANPETPNSTISREASTQSSSAAAS) is disordered. Over residues 341-357 (STISREASTQSSSAAAS) the composition is skewed to low complexity. One can recognise an RRM 3 domain in the interval 370–445 (NTVFVGGIDA…KKLKLGPAIR (76 aa)). DAZ domains lie at 497–520 (AYSA…YNYQ), 521–544 (EYPT…YNYQ), 545–568 (PFPA…YNYQ), 569–592 (AFPA…YNYQ), 593–616 (PFPA…YNYQ), 617–640 (AFPA…YNYQ), 641–664 (AFPA…YNYQ), 665–688 (AFPA…YNYQ), and 689–712 (AFPA…YNYQ).

The protein belongs to the RRM DAZ family. As to quaternary structure, forms a heterodimer with BOLL and DAZL. Interacts with PUM2, DAZAP1, DAZAP2, DZIP1 and DZIP3. Testis-specific. Expression restricted to premeiotic germ cells, particularly in spermatogonia (at protein level).

It is found in the cytoplasm. It localises to the nucleus. Its function is as follows. RNA-binding protein that plays an essential role in spermatogenesis. May act by binding to the 3'-UTR of mRNAs and regulating their translation. Promotes germ-cell progression to meiosis and formation of haploid germ cells. The sequence is that of Deleted in azoospermia protein 1 (DAZ1) from Homo sapiens (Human).